A 532-amino-acid polypeptide reads, in one-letter code: Collagen alpha-1(XXIII) chain (532 aa).

Over 1–23 (MGAGERAAGGGGAQDPGAGCGSR) the chain is Cytoplasmic. Residues 24–45 (ALSALCLLLSVGSAAACLLLGA) traverse the membrane as a helical; Signal-anchor for type II membrane protein segment. Residues 46 to 532 (QAAALHGRVA…GLPVPGCWHK (487 aa)) lie on the Extracellular side of the membrane. Disordered stretches follow at residues 102-296 (PSEC…GEQG) and 308-532 (LDAL…CWHK). 4 Collagen-like domains span residues 108 to 166 (PPGP…RGAQ), 173 to 232 (GPPG…PGKK), 240 to 298 (QPGL…QGDT), and 313 to 372 (GPPG…MGLS). A compositionally biased stretch (low complexity) spans 129-145 (QSGRDGYPGPLGLDGKP). The segment covering 174-184 (PPGPPGPPGAR) has biased composition (pro residues). A compositionally biased stretch (low complexity) spans 196–207 (RGAQGPAGPRGE). The span at 314–326 (PPGPQGAPGPPGI) shows a compositional bias: pro residues. Basic and acidic residues-rich tracts occupy residues 342–354 (DGEK…KGDP) and 380–393 (PKGE…DHLQ). Residues 403-414 (PGPPGPPGPPGP) are compositionally biased toward pro residues. Collagen-like domains are found at residues 404–452 (GPPG…GPPG) and 455–514 (GLPG…PGLD). 2 stretches are compositionally biased toward basic and acidic residues: residues 427 to 441 (DGAK…ERGP) and 478 to 495 (RGEK…ERGV).

As to quaternary structure, homotrimer. In terms of processing, undergoes proteolytic cleavage by furin protease to yield a 60 kDa soluble form that forms a homotrimer and exhibits a low affinity interaction with heparin.

The protein resides in the cell membrane. In Mus musculus (Mouse), this protein is Collagen alpha-1(XXIII) chain (Col23a1).